We begin with the raw amino-acid sequence, 165 residues long: V-type proton ATPase 16 kDa proteolipid subunit (165 aa).

Residues 1–10 (MSSVFSGDET) are Lumenal-facing. A helical membrane pass occupies residues 11–33 (APFFGFLGAAAALVFSCMGAAYG). Over 34–55 (TAKSGVGVASMGVMRPELVMKS) the chain is Cytoplasmic. Residues 56–76 (IVPVVMAGVLGIYGLIIAVII) traverse the membrane as a helical segment. Residues 77 to 95 (STGINPKAKPYFLFDGYAH) lie on the Lumenal side of the membrane. A helical membrane pass occupies residues 96 to 117 (LSSGLACGLAGLAAGMAIGIVG). Residues 118–129 (DAGVRANAQQPK) lie on the Cytoplasmic side of the membrane. The chain crosses the membrane as a helical span at residues 130 to 155 (LFVGMILILIFAEALALYGLIVGIIL). The Lumenal portion of the chain corresponds to 156–165 (SSRAGQSRAD).

Belongs to the V-ATPase proteolipid subunit family. In terms of assembly, V-ATPase is a heteromultimeric enzyme composed of a peripheral catalytic V1 complex (main components: subunits A, B, C, D, E, and F) attached to an integral membrane V0 proton pore complex (main component: the proteolipid protein; which is present as a hexamer that forms the proton-conducting pore).

The protein localises to the vacuole membrane. Proton-conducting pore forming subunit of the membrane integral V0 complex of vacuolar ATPase. V-ATPase is responsible for acidifying a variety of intracellular compartments in eukaryotic cells. The sequence is that of V-type proton ATPase 16 kDa proteolipid subunit (VATP-P1) from Avena sativa (Oat).